The primary structure comprises 203 residues: Thymidylate kinase (203 aa).

10–17 (GMDGAGKS) contacts ATP.

This sequence belongs to the thymidylate kinase family.

The enzyme catalyses dTMP + ATP = dTDP + ADP. Phosphorylation of dTMP to form dTDP in both de novo and salvage pathways of dTTP synthesis. This is Thymidylate kinase from Methylobacillus flagellatus (strain ATCC 51484 / DSM 6875 / VKM B-1610 / KT).